Consider the following 896-residue polypeptide: Translation initiation factor IF-2 (896 aa).

2 disordered regions span residues 32 to 99 (LAQA…TALP) and 117 to 304 (EITS…KQAE). The segment covering 35-48 (AGSSDTKNSPASKA) has biased composition (polar residues). The span at 153 to 169 (TPERIEETPIIRTRTEP) shows a compositional bias: basic and acidic residues. The segment covering 203 to 214 (AASTEETTQQQP) has biased composition (low complexity). The span at 215–227 (RQNDAASHNNKQQ) shows a compositional bias: polar residues. Residues 228–241 (PSGTSSRPASSAPS) are compositionally biased toward low complexity. Residues 256 to 280 (RGSERDRSKRSDESVKAFTGRDRYG) are compositionally biased toward basic and acidic residues. The region spanning 401 to 570 (IRSPIVAFMG…ALQAEVLELK (170 aa)) is the tr-type G domain. Residues 410–417 (GHVDHGKT) form a G1 region. 410 to 417 (GHVDHGKT) serves as a coordination point for GTP. The segment at 435–439 (AITQH) is G2. Positions 456 to 459 (DTPG) are G3. GTP contacts are provided by residues 456-460 (DTPGH) and 510-513 (NKCD). A G4 region spans residues 510 to 513 (NKCD). The G5 stretch occupies residues 546 to 548 (SAK).

Belongs to the TRAFAC class translation factor GTPase superfamily. Classic translation factor GTPase family. IF-2 subfamily.

The protein resides in the cytoplasm. In terms of biological role, one of the essential components for the initiation of protein synthesis. Protects formylmethionyl-tRNA from spontaneous hydrolysis and promotes its binding to the 30S ribosomal subunits. Also involved in the hydrolysis of GTP during the formation of the 70S ribosomal complex. This Chlamydia trachomatis serovar L2 (strain ATCC VR-902B / DSM 19102 / 434/Bu) protein is Translation initiation factor IF-2.